Consider the following 193-residue polypeptide: uncharacterized protein (193 aa).

The disordered stretch occupies residues 1-144; the sequence is MEKKRTLSVN…NNNNNNEGTI (144 aa). A compositionally biased stretch (low complexity) spans 29-86; sequence NSLNNIENNECNNNNNNNNNNNNNNSNSNNLNNSNNNNINTSSNSINSSNSINNSIDN. A compositionally biased stretch (polar residues) spans 103 to 118; sequence KMNSSQEFQSYLTPNK. A compositionally biased stretch (low complexity) spans 119 to 140; the sequence is NNNNRNNNNRNNNNNNNNNNNN. A helical transmembrane segment spans residues 158-180; that stretch reads YMIRPFLVGASASFGISIGMFYF.

The protein localises to the membrane. This is an uncharacterized protein from Dictyostelium discoideum (Social amoeba).